Here is a 70-residue protein sequence, read N- to C-terminus: Spore germination protein-like protein YpzD (70 aa).

Belongs to the GerPA/GerPF family.

This is Spore germination protein-like protein YpzD (ypzD) from Bacillus subtilis (strain 168).